A 427-amino-acid chain; its full sequence is Glutamate-1-semialdehyde 2,1-aminomutase (427 aa).

Lys-265 bears the N6-(pyridoxal phosphate)lysine mark.

It belongs to the class-III pyridoxal-phosphate-dependent aminotransferase family. HemL subfamily. As to quaternary structure, homodimer. It depends on pyridoxal 5'-phosphate as a cofactor.

It is found in the cytoplasm. It carries out the reaction (S)-4-amino-5-oxopentanoate = 5-aminolevulinate. It participates in porphyrin-containing compound metabolism; protoporphyrin-IX biosynthesis; 5-aminolevulinate from L-glutamyl-tRNA(Glu): step 2/2. The protein is Glutamate-1-semialdehyde 2,1-aminomutase of Paraburkholderia phytofirmans (strain DSM 17436 / LMG 22146 / PsJN) (Burkholderia phytofirmans).